The primary structure comprises 287 residues: Large ribosomal subunit protein uL2 (287 aa).

Positions 221–287 are disordered; sequence RGSVMNPCDH…SKRSRGGRDS (67 aa). Residues 258–287 are compositionally biased toward basic residues; that stretch reads KTRKRNKPSNRYVLRKRRKTSKRSRGGRDS.

This sequence belongs to the universal ribosomal protein uL2 family. As to quaternary structure, part of the 50S ribosomal subunit. Forms a bridge to the 30S subunit in the 70S ribosome.

In terms of biological role, one of the primary rRNA binding proteins. Required for association of the 30S and 50S subunits to form the 70S ribosome, for tRNA binding and peptide bond formation. It has been suggested to have peptidyltransferase activity; this is somewhat controversial. Makes several contacts with the 16S rRNA in the 70S ribosome. In Parasynechococcus marenigrum (strain WH8102), this protein is Large ribosomal subunit protein uL2.